The sequence spans 150 residues: Viral late gene transcription factor 2 (150 aa).

This sequence belongs to the orthopoxvirus VLTF-2/OPG126 family. As to quaternary structure, interacts with itself. Interacts with the late transcription factors VLTF-1/OPG093.

Its function is as follows. Acts with RNA polymerase to initiate transcription from late gene promoters. The polypeptide is Viral late gene transcription factor 2 (OPG126) (Vaccinia virus (strain Western Reserve) (VACV)).